Consider the following 1758-residue polypeptide: uncharacterized protein (1758 aa).

The signal sequence occupies residues 1–12 (MCFFLGSRLAYA). In terms of domain architecture, Autotransporter spans 1465-1758 (ENLYNNGMWI…SFILGGNYYF (294 aa)).

Its subcellular location is the cell outer membrane. This is an uncharacterized protein from Escherichia coli (strain K12).